We begin with the raw amino-acid sequence, 1659 residues long: MVAAQDDGAQRKLAHTLLLELMSYQFASPVRWIETQDVVLGQYRAERIIEIGPAATLTNMIKQTVQSKFLHSDRASLLQRQLLASEKQGKDIYYEDDGVGIGTGAEAPAPSAKTQAQASGGAGTIAGAGSSTAPVTAPPAPAAAKAVPAGGMQAIEDRQAQAFEIVRTLLSRILKIALTDVVGTQSIKSLSGGRSTLENEIIGDLASEFGSLPDRAEDLTVNDLSAALQKTFTGQMRKVILKMLHAMFASKMPGQFTVATARTYLHSRWGLGSGRQDSVLLLAIAQQPGSRLKEEAEARSFFDGLVQFYADEHGLTLGANSGAADETSGLGGGLVMDQKTLAALTGGQQELSKALLKIYAKHLDIDLDGDRRALHDLQATVEKDLRLALDQIHQELGEDFTDGVQPVFSARKARRFDSAWSWALQDLLQLYYEVSRTGGETEVDLAAKRCKHIEDAADPRLLDVLQRIVGRFEQQPVLSSMFTQLAQRCRDSLLHGPRYLARPDQQGPRTTISAEGDITYTEQERAEPVPLADLVYLPKSTEAAPLEPFLHLKQRTGGSSAWTYSHDLTEQYRAVLEQATTVGESFAGRSVLITGAGVGSIGAEVLKGLLAGGARVIVTTSRFSSSVVRKYQDLYTQVGSRGSELVVVPFNQASVQDVTALVNYIYDAQGGLHWDLDHILPFAAMPENGRTIEKIDPHSELAHRTMMVNTLRLLGAVKARKEAQGSRTRPTQVILPLSPNHGVFGGDGLYSESKLGLEALFNRWHSEDWSDYLSVCGAVIGWTRGTGLMSGNNLVAEGIEELGCRTFSQQEMAQCLLCLMFNTMCSLCEEAPLYADLSGRMGAVQNLRQKVQELRTEINETANTRRALLEELAMEARCSEGPTPTIDSEPAKATATPTLTAHVRLDFPPTVDYNQEIKPLTADLQGMVDLDRVVVVTGFGEIGPWGNARTRWEMEAYGEFSLEGCVEMAWLMGLIRYENSSSPGWVDAKTNERVHDHEVKHKYEEHILSHTGIRLIEPDRFGANYHPEHKQLLHEVLIQEDFPELEVPEATAQQMKLEHGNKVDIIPDPEGGDQCRVVLKKGAKLMVPKALRLDRMVIGQIPTGWDARKYGIPEDVISQVDPVTLYMLACSIEALLSSGITDPYEIYRYIHVSEAGNCVGSSLGGFNSLQQMYRGRYMEKEVQKDILQETFVNTIGAWMNMLLMSSAGPIRTPVGACATAIESVELGYDTLISGKAKFCFVGGGDDFGEEVLYEFANMKATANTVDEFEQGREASEMSRPAASTRNGFMESHGCGVQILTTARLAIEMGLPVRGVIAFVETSSDKASRSVPAPGRGILSKAREVRSSSPSSSLISSPLLNISNRRKRLDFRKKQIEFARETALEELQLEIAHVEESEVEDYIRERTAQINAEAQKDLRNAQYHLGNAFWQNDPSIAPLRGALAVWGLTIDDLDVASFHGTSTKLNEKNECSLIQAQLSHLGRAKGNVILGVFQKYLTGHPKGAAGAWMLNGALQILDTGIVPGNRNLDNVEAELQKNEQIAFLNRSLDTGRGSMRAVSVTSFGFGQKGAQTIVVHPKYLFATLEEQEYEEYLDKRAKRQKKADSFFYRGLASNRLFELKTAPPWAPQKELETLLDPTPPQTNVDDRVARSIVQQESAEP.

The interval 114-139 (TQAQASGGAGTIAGAGSSTAPVTAPP) is disordered. Positions 160–235 (AQAFEIVRTL…AALQKTFTGQ (76 aa)) constitute a Carrier domain. The residue at position 195 (Ser195) is an O-(pantetheine 4'-phosphoryl)serine. Residues 588-826 (GRSVLITGAG…LCLMFNTMCS (239 aa)) are ketoreductase (KR) domain. The Ketosynthase family 3 (KS3) domain maps to 1030–1575 (KQLLHEVLIQ…QKGAQTIVVH (546 aa)). Residues Cys1217, His1458, and His1499 each act as for beta-ketoacyl synthase activity in the active site. A disordered region spans residues 1631–1659 (ETLLDPTPPQTNVDDRVARSIVQQESAEP).

Belongs to the thiolase-like superfamily. Fungal fatty acid synthetase subunit alpha family. In terms of assembly, [Alpha(6)beta(6)] hexamers of two multifunctional subunits (alpha and beta). In terms of processing, 4'-phosphopantetheine is transferred from CoA to a specific serine of the acyl carrier domain by the C-terminal PPT domain. This modification is essential for activity because fatty acids are bound in thioester linkage to the sulfhydryl of the prosthetic group.

The enzyme catalyses acetyl-CoA + n malonyl-CoA + 2n NADPH + 4n H(+) = a long-chain-acyl-CoA + n CoA + n CO2 + 2n NADP(+).. It catalyses the reaction a fatty acyl-[ACP] + malonyl-[ACP] + H(+) = a 3-oxoacyl-[ACP] + holo-[ACP] + CO2. The catalysed reaction is a (3R)-hydroxyacyl-[ACP] + NADP(+) = a 3-oxoacyl-[ACP] + NADPH + H(+). It participates in secondary metabolite biosynthesis. Functionally, fatty acid synthase subunit alpha; part of the gene cluster that mediates the biosynthesis of aspercryptins, linear lipopeptides built from six amino acids including 2 highly unusual and nonproteogenic amino acids, 2-amino-octanoic acid (2aoa) and 2-amino-dodecanol (2adol). The core structure of aspercryptins is as follows: Ser/Ala-Thr-Ile/Val-2aoa-Asn-2adol. The first step of aspercryptin biosynthesis is the generation of the fatty acid precursors, octanoic and dodecanoic acids, by the FAS subunits atnF and atnM. The fatty acid precursors are likely transformed into the corresponding alpha-amino fatty acids in three steps. First, they are hydroxylated by the cytochrome P450 monooxygenase atnE, then oxidized to the corresponding alpha-keto acids by the NAD(P)-dependent oxidoreductase atnD, and finally converted to the alpha-amino fatty acids by the PLP-dependent aminotransferases atnH or atnJ. the alpha-amino fatty acids, 2-amino-octanoic and 2-amino-dodecanoic acids, are recognized, activated, and covalently tethered to the NRPS atnA by its fourth and sixth adenylation domains. The second module of atnA is the Thr module and contains an epimerase (E) domain responsible for the epimerization of Thr to D-allo-Thr. Additionally, despite atnA having only one epimerase domain, the first amino acid of aspercryptin A1 is D-Ser, suggesting that serine is either loaded directly as D-Ser on the first module or that the epimerase domain in the threonine module epimerizes both L-Ser and L-Thr. After condensation of the hexapeptide of aspercryptin, the C-terminal reductase (TE) domain might be involved in the reductive release and production of the aldehyde hexapeptide. Further reduction would generate aspercryptins. The variety of aspercryptins produced reflects the flexibility of the atnA NRPS, allowing incorporation of alanine instead of serine, valine for isoleucine, and a C10 fatty amino alcohol instead of the C12 version. AtnB seems to be involved in the selectivity for Ile versus Val by the third module. Moreover, type B, C and D aspercryptins have an additional N-terminal cichorine, acetyl and propionyl group respectively. The chain is Fatty acid synthase subunit alpha from Emericella nidulans (strain FGSC A4 / ATCC 38163 / CBS 112.46 / NRRL 194 / M139) (Aspergillus nidulans).